A 248-amino-acid chain; its full sequence is Adenosylcobinamide-GDP ribazoletransferase (248 aa).

6 helical membrane-spanning segments follow: residues 36 to 56 (FFLP…YLGL), 59 to 79 (FLPA…ITGG), 114 to 134 (GTIA…SLVL), 137 to 157 (YSIA…FLCL), 170 to 190 (IFIG…VLVL), and 199 to 219 (ATII…LLCL).

Belongs to the CobS family. It depends on Mg(2+) as a cofactor.

It is found in the cell membrane. The catalysed reaction is alpha-ribazole + adenosylcob(III)inamide-GDP = adenosylcob(III)alamin + GMP + H(+). The enzyme catalyses alpha-ribazole 5'-phosphate + adenosylcob(III)inamide-GDP = adenosylcob(III)alamin 5'-phosphate + GMP + H(+). It participates in cofactor biosynthesis; adenosylcobalamin biosynthesis; adenosylcobalamin from cob(II)yrinate a,c-diamide: step 7/7. Its function is as follows. Joins adenosylcobinamide-GDP and alpha-ribazole to generate adenosylcobalamin (Ado-cobalamin). Also synthesizes adenosylcobalamin 5'-phosphate from adenosylcobinamide-GDP and alpha-ribazole 5'-phosphate. The chain is Adenosylcobinamide-GDP ribazoletransferase from Clostridium botulinum (strain Langeland / NCTC 10281 / Type F).